A 221-amino-acid polypeptide reads, in one-letter code: Endo-1,4-beta-xylanase I (221 aa).

The N-terminal stretch at 1–30 (MVSFTSIITAAVAATGALAAPATDVSLVAR) is a signal peptide. The 189-residue stretch at 31-219 (QNTPNGEGTH…STGNAQITVN (189 aa)) folds into the GH11 domain. Glu115 functions as the Nucleophile in the catalytic mechanism. The disordered stretch occupies residues 126-157 (DPSSQSQNKGTVTSDGSSYKIAQSTRTNQPSI). The active-site Proton donor is the Glu206.

It belongs to the glycosyl hydrolase 11 (cellulase G) family. In terms of processing, the N-terminus is blocked.

It is found in the secreted. The enzyme catalyses Endohydrolysis of (1-&gt;4)-beta-D-xylosidic linkages in xylans.. It participates in glycan degradation; xylan degradation. In terms of biological role, major xylan-degrading enzyme. Contributes to the hydrolysis of arabinoxylan, the major component of maize cell-walls. This chain is Endo-1,4-beta-xylanase I (XYL1), found in Cochliobolus carbonum (Maize leaf spot fungus).